We begin with the raw amino-acid sequence, 257 residues long: Type III pantothenate kinase (257 aa).

An ATP-binding site is contributed by 6 to 13; it reads DCGNTNTV. A substrate-binding site is contributed by 107 to 110; that stretch reads GPDR. Aspartate 109 serves as the catalytic Proton acceptor. Aspartate 129 lines the K(+) pocket. Threonine 132 provides a ligand contact to ATP. A substrate-binding site is contributed by threonine 184.

The protein belongs to the type III pantothenate kinase family. In terms of assembly, homodimer. It depends on NH4(+) as a cofactor. The cofactor is K(+).

The protein localises to the cytoplasm. It carries out the reaction (R)-pantothenate + ATP = (R)-4'-phosphopantothenate + ADP + H(+). The protein operates within cofactor biosynthesis; coenzyme A biosynthesis; CoA from (R)-pantothenate: step 1/5. Functionally, catalyzes the phosphorylation of pantothenate (Pan), the first step in CoA biosynthesis. The sequence is that of Type III pantothenate kinase from Roseobacter denitrificans (strain ATCC 33942 / OCh 114) (Erythrobacter sp. (strain OCh 114)).